The following is a 1486-amino-acid chain: Chromosome partition protein MukB (1486 aa).

G34–S41 provides a ligand contact to ATP. Coiled-coil stretches lie at residues L326–Q418, L444–Q480, and R509–V603. Residues P666–R783 form a flexible hinge region. Coiled coils occupy residues E835 to E923, E977 to A1115, and V1209 to S1266.

It belongs to the SMC family. MukB subfamily. As to quaternary structure, homodimerization via its hinge domain. Binds to DNA via its C-terminal region. Interacts, and probably forms a ternary complex, with MukE and MukF via its C-terminal region. The complex formation is stimulated by calcium or magnesium. Interacts with tubulin-related protein FtsZ.

The protein resides in the cytoplasm. It is found in the nucleoid. Plays a central role in chromosome condensation, segregation and cell cycle progression. Functions as a homodimer, which is essential for chromosome partition. Involved in negative DNA supercoiling in vivo, and by this means organize and compact chromosomes. May achieve or facilitate chromosome segregation by condensation DNA from both sides of a centrally located replisome during cell division. The chain is Chromosome partition protein MukB from Shigella boydii serotype 18 (strain CDC 3083-94 / BS512).